We begin with the raw amino-acid sequence, 341 residues long: MAAPDSRLPNIALAGPTAAGKTAAALALAAALGRRQAVEIISVDSALVYRGMDIGSAKPTPAERAAVPHHLIDIRDPLQAYSAAEFVQDARRLIGEIRARGALPLLVGGTMLYFKALFDGLDAMPAADPAVRARLNARAAEQGWPALHTELARVDPVTAARLAPGDSQRIQRALEVWQISGQPLSSFHAIEKGAAGAYGACACALFSLEPQDRAWLHERIARRFDAMLAAGFIAEVQALRARGDLHPDLPAMRCVGYRQVWEALDWQARHAGGPPLHGAPLHARGMDAVRERGVAATRQLAKRQITWLRSMPQRHTTACDQPQAVAQLVQAVLQRLEQHAP.

Gly-15–Thr-22 contributes to the ATP binding site. Position 17 to 22 (Thr-17 to Thr-22) interacts with substrate. 4 interaction with substrate tRNA regions span residues Asp-44–Leu-47, Gln-168–Arg-172, Arg-253–Arg-258, and Lys-302–Arg-309.

Belongs to the IPP transferase family. In terms of assembly, monomer. Mg(2+) serves as cofactor.

It carries out the reaction adenosine(37) in tRNA + dimethylallyl diphosphate = N(6)-dimethylallyladenosine(37) in tRNA + diphosphate. In terms of biological role, catalyzes the transfer of a dimethylallyl group onto the adenine at position 37 in tRNAs that read codons beginning with uridine, leading to the formation of N6-(dimethylallyl)adenosine (i(6)A). This Verminephrobacter eiseniae (strain EF01-2) protein is tRNA dimethylallyltransferase.